The sequence spans 456 residues: Exodeoxyribonuclease 7 large subunit (456 aa).

It belongs to the XseA family. Heterooligomer composed of large and small subunits.

The protein resides in the cytoplasm. It carries out the reaction Exonucleolytic cleavage in either 5'- to 3'- or 3'- to 5'-direction to yield nucleoside 5'-phosphates.. Functionally, bidirectionally degrades single-stranded DNA into large acid-insoluble oligonucleotides, which are then degraded further into small acid-soluble oligonucleotides. The protein is Exodeoxyribonuclease 7 large subunit of Shigella flexneri serotype 5b (strain 8401).